The following is a 357-amino-acid chain: Elongation factor Ts (357 aa).

Residues 82–85 (TDFV) are involved in Mg(2+) ion dislocation from EF-Tu.

It belongs to the EF-Ts family.

The protein localises to the cytoplasm. Functionally, associates with the EF-Tu.GDP complex and induces the exchange of GDP to GTP. It remains bound to the aminoacyl-tRNA.EF-Tu.GTP complex up to the GTP hydrolysis stage on the ribosome. This is Elongation factor Ts from Campylobacter jejuni subsp. jejuni serotype O:2 (strain ATCC 700819 / NCTC 11168).